The following is a 101-amino-acid chain: YcgL domain-containing protein ACIAD2309 (101 aa).

The region spanning 1 to 93 (MHCDIYRSSK…PPEGFINPSD (93 aa)) is the YcgL domain.

This Acinetobacter baylyi (strain ATCC 33305 / BD413 / ADP1) protein is YcgL domain-containing protein ACIAD2309.